A 273-amino-acid polypeptide reads, in one-letter code: Endoplasmic reticulum resident protein 27 (273 aa).

Positions 1 to 25 (MEAAPSRFMFLLFLLTCELAAEVAA) are cleaved as a signal peptide. Residues 39 to 152 (EPTWLTDVPA…MVTEYNPVTV (114 aa)) form the Thioredoxin domain. The N-linked (GlcNAc...) asparagine glycan is linked to Asn-100. The PDIA3-binding site stretch occupies residues 230-233 (DEWD). Residues 270-273 (KVEL) carry the Prevents secretion from ER motif.

It belongs to the protein disulfide isomerase family. As to quaternary structure, interacts with PDIA3.

It is found in the endoplasmic reticulum lumen. Specifically binds unfolded proteins and may recruit protein disulfide isomerase PDIA3 to unfolded substrates. Binds protein substrates via a hydrophobic pocket in the C-terminal domain. May play a role in the unfolded stress response. This chain is Endoplasmic reticulum resident protein 27 (ERP27), found in Homo sapiens (Human).